A 218-amino-acid polypeptide reads, in one-letter code: Small ribosomal subunit protein uS3 (218 aa).

Positions 38–106 (IREYINKRLQ…RVHINIVEIK (69 aa)) constitute a KH type-2 domain.

Belongs to the universal ribosomal protein uS3 family. Part of the 30S ribosomal subunit. Forms a tight complex with proteins S10 and S14.

Its function is as follows. Binds the lower part of the 30S subunit head. Binds mRNA in the 70S ribosome, positioning it for translation. This is Small ribosomal subunit protein uS3 from Geobacillus sp. (strain WCH70).